The sequence spans 485 residues: MELFFICGLVLFSTLSLISLFLLHNHSSARGYRLPPGRMGWPFIGESYEFLANGWKGYPEKFIFSRLAKYKPNQVFKTSILGEKVAVMCGATCNKFLFSNEGKLVNAWWPNSVNKIFPSSTQTSSKEEAKKMRKLLPTFFKPEALQRYIPIMDEIAIRHMEDEWEGKSKIEVFPLAKRYTFWLACRLFLSIDDPVHVAKFADPFNDIASGIISIPIDLPGTPFNRGIKASNVVRQELKTIIKQRKLDLSDNKASPTQDILSHMLLTPDEDGRYMNELDIADKILGLLIGGHDTASAACTFVVKFLAELPHIYDGVYKEQMEIAKSKKEGERLNWEDIQKMKYSWNVACEVMRLAPPLQGAFREALSDFMYAGFQIPKGWKLYWSANSTHRNPECFPEPEKFDPARFDGSGPAPYTYVPFGGGPRMCPGKEYARLEILVFMHNIVKRFKWEKLIPDETIVVNPMPTPAKGLPVRLRPHSKPVTVSA.

A helical; Signal-anchor for type II membrane protein transmembrane segment spans residues 3-23; sequence LFFICGLVLFSTLSLISLFLL. N-linked (GlcNAc...) asparagine glycosylation is found at Asn25 and Asn386. Cys426 is a binding site for heme.

This sequence belongs to the cytochrome P450 family. Requires heme as cofactor. As to expression, mainly expressed in flowers and flower buds, to a lesser extent in young leaves and, at low levels, in old leaves, stems and roots.

The protein resides in the membrane. The enzyme catalyses beta-amyrin + 3 reduced [NADPH--hemoprotein reductase] + 3 O2 = oleanolate + 3 oxidized [NADPH--hemoprotein reductase] + 4 H2O + 4 H(+). It participates in secondary metabolite biosynthesis; terpenoid biosynthesis. Functionally, component of the oleanane-type triterpene saponins (e.g. saponarioside A and saponarioside B) biosynthetic pathway, leading to the production of natural products with detergent properties used as traditional sources of soap. An oxidoreductase that facilitates the oxidation of the methyl group to a carboxyl group at the C-28 position of beta-amyrin, resulting in the formation of oleanolate. The polypeptide is Beta-amyrin 28-monooxygenase CYP716A378 (Saponaria officinalis (Common soapwort)).